We begin with the raw amino-acid sequence, 374 residues long: WW domain-binding protein 4 (374 aa).

The segment at 11-42 (KFCDYCKCWIADNRPSVEFHERGKNHKENVAR) adopts a Matrin-type zinc-finger fold. Residues 91–109 (EPTISPVTNTVQPTPTANQ) show a composition bias toward polar residues. 2 disordered regions span residues 91–126 (EPTISPVTNTVQPTPTANQQKEKKKKKKKKEASKGR) and 188–328 (SKWE…EAGA). Residues 112–121 (EKKKKKKKKE) are compositionally biased toward basic residues. 2 WW domains span residues 121-154 (EASKGRWVEGVTADGHCYYYDLVTGASQWEKPEG) and 162-195 (TAAKAIWVEGLSEDGYTYYYNTETGESKWEKPDD). Composition is skewed to basic and acidic residues over residues 188–197 (SKWEKPDDFI) and 205–270 (SSKD…EKTT). Phosphoserine occurs at positions 219, 226, and 228. A compositionally biased stretch (polar residues) spans 315-325 (STENECLSSSE). Positions 355 to 373 (KKRRIENGKSRNLRQRGED) are interaction with SNRNP200.

In terms of assembly, component of the spliceosome B complex. Associated with U2 snRNPs. Binds splicing factors SNRPB, SNRPC and SF1. Interacts via the WW domains with the Pro-rich domains of KHDRBS1/SAM68. Interacts via the WW domains with the Pro-rich domains of WBP11. Interacts with SNRNP200.

Its subcellular location is the nucleus. The protein resides in the nucleus speckle. Its function is as follows. Involved in pre-mRNA splicing as a component of the spliceosome. May play a role in cross-intron bridging of U1 and U2 snRNPs in the mammalian A complex. The polypeptide is WW domain-binding protein 4 (Wbp4) (Rattus norvegicus (Rat)).